A 548-amino-acid polypeptide reads, in one-letter code: Adenine deaminase (548 aa).

The protein belongs to the metallo-dependent hydrolases superfamily. Adenine deaminase family. Requires Mn(2+) as cofactor.

The catalysed reaction is adenine + H2O + H(+) = hypoxanthine + NH4(+). In Borreliella burgdorferi (strain ATCC 35210 / DSM 4680 / CIP 102532 / B31) (Borrelia burgdorferi), this protein is Adenine deaminase.